We begin with the raw amino-acid sequence, 136 residues long: Large ribosomal subunit protein uL16 (136 aa).

This sequence belongs to the universal ribosomal protein uL16 family. In terms of assembly, part of the 50S ribosomal subunit.

Its function is as follows. Binds 23S rRNA and is also seen to make contacts with the A and possibly P site tRNAs. This Rickettsia bellii (strain OSU 85-389) protein is Large ribosomal subunit protein uL16.